Here is a 421-residue protein sequence, read N- to C-terminus: 4-hydroxy-3-methylbut-2-en-1-yl diphosphate synthase (flavodoxin) (421 aa).

Residues Cys-298, Cys-301, Cys-344, and Glu-351 each contribute to the [4Fe-4S] cluster site.

This sequence belongs to the IspG family. [4Fe-4S] cluster serves as cofactor.

It catalyses the reaction (2E)-4-hydroxy-3-methylbut-2-enyl diphosphate + oxidized [flavodoxin] + H2O + 2 H(+) = 2-C-methyl-D-erythritol 2,4-cyclic diphosphate + reduced [flavodoxin]. The protein operates within isoprenoid biosynthesis; isopentenyl diphosphate biosynthesis via DXP pathway; isopentenyl diphosphate from 1-deoxy-D-xylulose 5-phosphate: step 5/6. Its function is as follows. Converts 2C-methyl-D-erythritol 2,4-cyclodiphosphate (ME-2,4cPP) into 1-hydroxy-2-methyl-2-(E)-butenyl 4-diphosphate. In Neisseria meningitidis serogroup B (strain ATCC BAA-335 / MC58), this protein is 4-hydroxy-3-methylbut-2-en-1-yl diphosphate synthase (flavodoxin).